The following is a 163-amino-acid chain: NADH-quinone oxidoreductase subunit I (163 aa).

4Fe-4S ferredoxin-type domains are found at residues 53–83 (LRRY…IEAG) and 94–123 (TRYD…EGPN). Residues C63, C66, C69, C73, C103, C106, C109, and C113 each contribute to the [4Fe-4S] cluster site.

Belongs to the complex I 23 kDa subunit family. As to quaternary structure, NDH-1 is composed of 14 different subunits. Subunits NuoA, H, J, K, L, M, N constitute the membrane sector of the complex. Requires [4Fe-4S] cluster as cofactor.

Its subcellular location is the cell inner membrane. The catalysed reaction is a quinone + NADH + 5 H(+)(in) = a quinol + NAD(+) + 4 H(+)(out). Functionally, NDH-1 shuttles electrons from NADH, via FMN and iron-sulfur (Fe-S) centers, to quinones in the respiratory chain. The immediate electron acceptor for the enzyme in this species is believed to be ubiquinone. Couples the redox reaction to proton translocation (for every two electrons transferred, four hydrogen ions are translocated across the cytoplasmic membrane), and thus conserves the redox energy in a proton gradient. In Parvibaculum lavamentivorans (strain DS-1 / DSM 13023 / NCIMB 13966), this protein is NADH-quinone oxidoreductase subunit I.